Reading from the N-terminus, the 432-residue chain is Asparagine--tRNA ligase (432 aa).

The protein belongs to the class-II aminoacyl-tRNA synthetase family. As to quaternary structure, homodimer.

The protein resides in the cytoplasm. It carries out the reaction tRNA(Asn) + L-asparagine + ATP = L-asparaginyl-tRNA(Asn) + AMP + diphosphate + H(+). This is Asparagine--tRNA ligase from Limosilactobacillus reuteri (strain DSM 20016) (Lactobacillus reuteri).